Reading from the N-terminus, the 401-residue chain is Patatin-like protein 4 (401 aa).

In terms of domain architecture, PNPLA spans 17–218; it reads LSLDGGGVRG…TANDPTLVGM (202 aa). Positions 21 to 26 match the GXGXXG motif; that stretch reads GGGVRG. The GXSXG motif lies at 60 to 64; it reads GTSTG. S62 (nucleophile) is an active-site residue. Residue D205 is the Proton acceptor of the active site. Positions 205–207 match the DGA/G motif; the sequence is DGG.

Belongs to the patatin family.

Possesses non-specific lipolytic acyl hydrolase (LAH) activity. Hydrolyzes phospholipids as well as galactolipids. May play a role in disease resistance. The sequence is that of Patatin-like protein 4 (PLP4) from Arabidopsis thaliana (Mouse-ear cress).